We begin with the raw amino-acid sequence, 373 residues long: Chaperone protein DnaJ (373 aa).

Residues 4-68 (DYYEILGLTK…VKREQYNQFG (65 aa)) enclose the J domain. Residues 142-224 (GKEIVEPLEK…CKGKTHTKTT (83 aa)) form a CR-type zinc finger. Residues Cys-155, Cys-158, Cys-172, Cys-175, Cys-198, Cys-201, Cys-212, and Cys-215 each coordinate Zn(2+). CXXCXGXG motif repeat units lie at residues 155–162 (CNTCNGSG), 172–179 (CTQCSGMG), 198–205 (CSKCNGIG), and 212–219 (CLICKGKT).

This sequence belongs to the DnaJ family. As to quaternary structure, homodimer. The cofactor is Zn(2+).

It localises to the cytoplasm. In terms of biological role, participates actively in the response to hyperosmotic and heat shock by preventing the aggregation of stress-denatured proteins and by disaggregating proteins, also in an autonomous, DnaK-independent fashion. Unfolded proteins bind initially to DnaJ; upon interaction with the DnaJ-bound protein, DnaK hydrolyzes its bound ATP, resulting in the formation of a stable complex. GrpE releases ADP from DnaK; ATP binding to DnaK triggers the release of the substrate protein, thus completing the reaction cycle. Several rounds of ATP-dependent interactions between DnaJ, DnaK and GrpE are required for fully efficient folding. Also involved, together with DnaK and GrpE, in the DNA replication of plasmids through activation of initiation proteins. The protein is Chaperone protein DnaJ of Mycoplasma mobile (strain ATCC 43663 / 163K / NCTC 11711) (Mesomycoplasma mobile).